The chain runs to 337 residues: Annexin E1 (337 aa).

Annexin repeat units follow at residues 10 to 80 (TGVT…MLYK), 81 to 154 (PRAQ…AVAT), 161 to 238 (DTHE…LAHD), and 242 to 312 (DPCC…LLWE).

It belongs to the annexin family.

It is found in the cell projection. The protein localises to the cilium. It localises to the flagellum. Its function is as follows. May function as a calcium-regulated structural element linking phospholipid bilayer and underlying axoneme. This Giardia intestinalis (Giardia lamblia) protein is Annexin E1 (ANXE1).